Here is a 643-residue protein sequence, read N- to C-terminus: 1-deoxy-D-xylulose-5-phosphate synthase (643 aa).

Thiamine diphosphate is bound by residues histidine 78 and 119-121; that span reads AHS. Aspartate 150 contributes to the Mg(2+) binding site. Thiamine diphosphate is bound by residues 151 to 152, asparagine 179, tyrosine 288, and glutamate 370; that span reads GS. Position 179 (asparagine 179) interacts with Mg(2+).

This sequence belongs to the transketolase family. DXPS subfamily. Homodimer. Mg(2+) serves as cofactor. It depends on thiamine diphosphate as a cofactor.

The enzyme catalyses D-glyceraldehyde 3-phosphate + pyruvate + H(+) = 1-deoxy-D-xylulose 5-phosphate + CO2. It participates in metabolic intermediate biosynthesis; 1-deoxy-D-xylulose 5-phosphate biosynthesis; 1-deoxy-D-xylulose 5-phosphate from D-glyceraldehyde 3-phosphate and pyruvate: step 1/1. Its function is as follows. Catalyzes the acyloin condensation reaction between C atoms 2 and 3 of pyruvate and glyceraldehyde 3-phosphate to yield 1-deoxy-D-xylulose-5-phosphate (DXP). The polypeptide is 1-deoxy-D-xylulose-5-phosphate synthase (Brucella abortus (strain S19)).